The following is an 81-amino-acid chain: ATP synthase subunit c, chloroplastic (81 aa).

Transmembrane regions (helical) follow at residues Pro-3–Gly-23 and Leu-53–Ala-73.

This sequence belongs to the ATPase C chain family. As to quaternary structure, F-type ATPases have 2 components, F(1) - the catalytic core - and F(0) - the membrane proton channel. F(1) has five subunits: alpha(3), beta(3), gamma(1), delta(1), epsilon(1). F(0) has four main subunits: a(1), b(1), b'(1) and c(10-14). The alpha and beta chains form an alternating ring which encloses part of the gamma chain. F(1) is attached to F(0) by a central stalk formed by the gamma and epsilon chains, while a peripheral stalk is formed by the delta, b and b' chains.

The protein localises to the plastid. Its subcellular location is the chloroplast thylakoid membrane. F(1)F(0) ATP synthase produces ATP from ADP in the presence of a proton or sodium gradient. F-type ATPases consist of two structural domains, F(1) containing the extramembraneous catalytic core and F(0) containing the membrane proton channel, linked together by a central stalk and a peripheral stalk. During catalysis, ATP synthesis in the catalytic domain of F(1) is coupled via a rotary mechanism of the central stalk subunits to proton translocation. In terms of biological role, key component of the F(0) channel; it plays a direct role in translocation across the membrane. A homomeric c-ring of between 10-14 subunits forms the central stalk rotor element with the F(1) delta and epsilon subunits. This is ATP synthase subunit c, chloroplastic from Huperzia lucidula (Shining clubmoss).